Consider the following 270-residue polypeptide: Homeobox protein Hox-D12 (270 aa).

The interval 102 to 122 (APEAAAGPEERGRTRPSFAPE) is disordered. A DNA-binding region (homeobox) is located at residues 202-261 (ARKKRKPYTKQQIAELENEFLVNEFINRQKRKELSNRLNLSDQQVKIWFQNRRMKKKRVV).

This sequence belongs to the Abd-B homeobox family.

Its subcellular location is the nucleus. In terms of biological role, sequence-specific transcription factor which is part of a developmental regulatory system that provides cells with specific positional identities on the anterior-posterior axis. The polypeptide is Homeobox protein Hox-D12 (HOXD12) (Homo sapiens (Human)).